Here is a 1174-residue protein sequence, read N- to C-terminus: Probable DNA-directed RNA polymerase I subunit RPA2 (1174 aa).

A compositionally biased stretch (basic and acidic residues) spans 1-16 (MSFQTLERERTFKNPP). Positions 1–23 (MSFQTLERERTFKNPPKDGTSFP) are disordered. The C4-type zinc finger occupies 1089–1118 (CRDCGSIISIMSTISMNGVGSASEVRCRSC).

This sequence belongs to the RNA polymerase beta chain family. In terms of assembly, component of the RNA polymerase I (Pol I) complex consisting of 14 subunits.

The protein resides in the nucleus. It localises to the nucleolus. The catalysed reaction is RNA(n) + a ribonucleoside 5'-triphosphate = RNA(n+1) + diphosphate. Functionally, DNA-dependent RNA polymerase catalyzes the transcription of DNA into RNA using the four ribonucleoside triphosphates as substrates. Second largest core component of RNA polymerase I which synthesizes ribosomal RNA precursors. Proposed to contribute to the polymerase catalytic activity and forms the polymerase active center together with the largest subunit. Pol I is composed of mobile elements and RPA2 is part of the core element with the central large cleft and probably a clamp element that moves to open and close the cleft. This Schizosaccharomyces pombe (strain 972 / ATCC 24843) (Fission yeast) protein is Probable DNA-directed RNA polymerase I subunit RPA2 (rpa2).